A 166-amino-acid polypeptide reads, in one-letter code: Lutropin subunit beta (166 aa).

The first 21 residues, 1-21, serve as a signal peptide directing secretion; that stretch reads MGGAQVLLLLTLLGTPLVTHG. Intrachain disulfides connect Cys-56–Cys-104, Cys-70–Cys-119, Cys-73–Cys-157, Cys-81–Cys-135, Cys-85–Cys-137, and Cys-140–Cys-147. A glycan (N-linked (GlcNAc...) asparagine) is linked at Asn-60.

Belongs to the glycoprotein hormones subunit beta family. As to quaternary structure, heterodimer of a common alpha chain and a unique beta chain which confers biological specificity to thyrotropin, lutropin, follitropin and gonadotropin.

It is found in the secreted. Promotes spermatogenesis and ovulation by stimulating the testes and ovaries to synthesize steroids. This is Lutropin subunit beta (LHB) from Coturnix japonica (Japanese quail).